Here is a 453-residue protein sequence, read N- to C-terminus: O-glucose prenyltransferase PaPT (453 aa).

L-tryptophan is bound at residue 95–96 (AP). 7 residues coordinate substrate: K210, Y212, R279, K281, Y283, Y368, and Y435.

It belongs to the tryptophan dimethylallyltransferase family.

The protein operates within mycotoxin biosynthesis. In terms of biological role, O-glucose prenyltransferase; part of the 2 gene clusters that mediate the biosynthesis of fusicoccins, diterpene glucosides that display phytohormone-like activity and function as potent activators of plasma membrane H(+)-ATPases in plants by modifying 14-3-3 proteins and cause the plant disease constriction canker. The first step in the pathway is performed by the fusicoccadiene synthase PaFS that possesses both prenyl transferase and terpene cyclase activity, converting isopentenyl diphosphate and dimethylallyl diphosphate into geranylgeranyl diphosphate (GGDP) and successively converting GGDP into fusicocca-2,10(14)-diene, a precursor for fusicoccin H. The second step is the oxidation at the C-8 position by the cytochrome P450 monooxygenase PaP450-2 to yield fusicocca-2,10(14)-diene-8-beta-ol. The cytochrome P450 monooxygenase PaP450-1 then catalyzes the hydroxylation at the C-16 position to produce fusicocca-2,10(14)-diene-8-beta,16-diol. The dioxygenase fc-dox then catalyzes the 16-oxydation of fusicocca-2,10(14)-diene-8-beta,16-diol to yield an aldehyde (8-beta-hydroxyfusicocca-1,10(14)-dien-16-al). The short-chain dehydrogenase/reductase fc-sdr catalyzes the reduction of the aldehyde to yield fusicocca-1,10(14)-diene-8-beta,16-diol. The next step is the hydroxylation at C-9 performed by the cytochrome P450 monooxygenase PaP450-3 that leads to fusicoccin H aglycon which is glycosylated to fusicoccin H by the O-glycosyltransferase PaGT. Hydroxylation at C-12 by the cytochrome P450 monooxygenase PaP450-4 leads then to the production of fusicoccin Q and is followed by methylation by the O-methyltransferase PaMT to yield fusicoccin P. Fusicoccin P is further converted to fusicoccin J via prenylation by the O-glucose prenyltransferase PaPT. Cytochrome P450 monooxygenase PaP450-5 then performs hydroxylation at C-19 to yield dideacetyl-fusicoccin A which is acetylated to 3'-O-deacetyl-fusicoccin A by the O-acetyltransferase PaAT-2. Finally, a another acetylation by the O-acetyltransferase PaAT-1 yields fusicoccin A. In Phomopsis amygdali (Fusicoccum amygdali), this protein is O-glucose prenyltransferase PaPT.